The following is a 368-amino-acid chain: Agmatine deiminase (368 aa).

Catalysis depends on C357, which acts as the Amidino-cysteine intermediate.

It belongs to the agmatine deiminase family. As to quaternary structure, homodimer.

The enzyme catalyses agmatine + H2O = N-carbamoylputrescine + NH4(+). Its pathway is amine and polyamine biosynthesis; putrescine biosynthesis via agmatine pathway; N-carbamoylputrescine from agmatine: step 1/1. Mediates the hydrolysis of agmatine into N-carbamoylputrescine in the arginine decarboxylase (ADC) pathway of putrescine biosynthesis, a basic polyamine. The protein is Agmatine deiminase of Pseudomonas putida (strain ATCC 700007 / DSM 6899 / JCM 31910 / BCRC 17059 / LMG 24140 / F1).